Here is a 268-residue protein sequence, read N- to C-terminus: Resolvase (268 aa).

Positions 47 to 250 (ELPKYLLAPE…FALDVAARHR (204 aa)) constitute a Tyr recombinase domain. Residues R82, K114, H202, R205, and H228 contribute to the active site. The active-site O-(3'-phospho-DNA)-tyrosine intermediate is the Y237.

The protein belongs to the 'phage' integrase family.

Its function is as follows. Acts as a repressor of transcription and as a site-specific resolvase that cleaves at the RfsF site. The protein is Resolvase (resD) of Escherichia coli (strain K12).